A 174-amino-acid chain; its full sequence is Dual-action ribosomal maturation protein DarP (174 aa).

This sequence belongs to the DarP family.

It is found in the cytoplasm. In terms of biological role, member of a network of 50S ribosomal subunit biogenesis factors which assembles along the 30S-50S interface, preventing incorrect 23S rRNA structures from forming. Promotes peptidyl transferase center (PTC) maturation. The protein is Dual-action ribosomal maturation protein DarP of Vibrio atlanticus (strain LGP32) (Vibrio splendidus (strain Mel32)).